A 321-amino-acid chain; its full sequence is Replication factor C small subunit (321 aa).

ATP is bound at residue 46 to 53; sequence GPAGVGKT.

It belongs to the activator 1 small subunits family. RfcS subfamily. Heterohexamer composed of four small subunits (RfcS) and two large subunits (RfcL).

In terms of biological role, part of the RFC clamp loader complex which loads the PCNA sliding clamp onto DNA. The complex possesses DNA-dependent ATPase activity which is further stimulated by PCNA. In conjunction with PCNA stimulates DNA synthesis by PolB, relieving inhibition by replication protein A (RPA). This is Replication factor C small subunit (rfcS) from Methanothermobacter thermautotrophicus (strain ATCC 29096 / DSM 1053 / JCM 10044 / NBRC 100330 / Delta H) (Methanobacterium thermoautotrophicum).